The chain runs to 182 residues: Bifunctional dihydrofolate reductase-thymidylate synthase (182 aa).

Residues 1-182 (AICACCKVLN…YFTRINNAYT (182 aa)) enclose the DHFR domain. 25 to 31 (GLGNAGG) contributes to the NADP(+) binding site. Asp40 contacts substrate. NADP(+) is bound by residues 93-95 (KTS) and 114-117 (LSRT). Ile154, Tyr160, and Thr175 together coordinate substrate. Position 155 to 162 (155 to 162 (GGASVYKE)) interacts with NADP(+).

It in the N-terminal section; belongs to the dihydrofolate reductase family. This sequence in the C-terminal section; belongs to the thymidylate synthase family. In terms of assembly, homodimer.

It carries out the reaction (6S)-5,6,7,8-tetrahydrofolate + NADP(+) = 7,8-dihydrofolate + NADPH + H(+). It catalyses the reaction dUMP + (6R)-5,10-methylene-5,6,7,8-tetrahydrofolate = 7,8-dihydrofolate + dTMP. It functions in the pathway cofactor biosynthesis; tetrahydrofolate biosynthesis; 5,6,7,8-tetrahydrofolate from 7,8-dihydrofolate: step 1/1. Functionally, bifunctional enzyme. Involved in de novo dTMP biosynthesis. Key enzyme in folate metabolism. Catalyzes an essential reaction for de novo glycine and purine synthesis, DNA precursor synthesis, and for the conversion of dUMP to dTMP. The chain is Bifunctional dihydrofolate reductase-thymidylate synthase from Plasmodium vinckei.